The chain runs to 275 residues: Urease accessory protein UreD (275 aa).

The protein belongs to the UreD family. UreD, UreF and UreG form a complex that acts as a GTP-hydrolysis-dependent molecular chaperone, activating the urease apoprotein by helping to assemble the nickel containing metallocenter of UreC. The UreE protein probably delivers the nickel.

It is found in the cytoplasm. In terms of biological role, required for maturation of urease via the functional incorporation of the urease nickel metallocenter. This Cereibacter sphaeroides (strain ATCC 17025 / ATH 2.4.3) (Rhodobacter sphaeroides) protein is Urease accessory protein UreD.